A 205-amino-acid polypeptide reads, in one-letter code: Transcription termination/antitermination protein NusG (205 aa).

Residues 154 to 178 (GDHIMVLSGPFKDFEGDVIEVSPER) form the KOW domain.

The protein belongs to the NusG family.

In terms of biological role, participates in transcription elongation, termination and antitermination. The protein is Transcription termination/antitermination protein NusG of Synechocystis sp. (strain ATCC 27184 / PCC 6803 / Kazusa).